A 358-amino-acid chain; its full sequence is Methylthioribose-1-phosphate isomerase (358 aa).

Residues 54–56 (RGA), R96, and Q205 each bind substrate. D246 acts as the Proton donor in catalysis. 256-257 (NK) is a substrate binding site.

The protein belongs to the eIF-2B alpha/beta/delta subunits family. MtnA subfamily.

The enzyme catalyses 5-(methylsulfanyl)-alpha-D-ribose 1-phosphate = 5-(methylsulfanyl)-D-ribulose 1-phosphate. The protein operates within amino-acid biosynthesis; L-methionine biosynthesis via salvage pathway; L-methionine from S-methyl-5-thio-alpha-D-ribose 1-phosphate: step 1/6. Functionally, catalyzes the interconversion of methylthioribose-1-phosphate (MTR-1-P) into methylthioribulose-1-phosphate (MTRu-1-P). The protein is Methylthioribose-1-phosphate isomerase of Pseudomonas syringae pv. syringae (strain B728a).